The chain runs to 303 residues: MAAAAAWTGAASPNSLLLSRSPPHAAALAPSPGSSMRRRLLLGVGTPAVAALAAAAPPAVLQDGAVTVLITAGAYSLVRVFDELTERRLIEKSLSRKVVHVLSGVLFMSSWPLFSNSTEARYFAAVVPFLNSMRLLIYGLRLYTDEALVKSVTREGKPEELLRGPLYYVLVLLFSVLVFWRESPIGIVSLSMMSGGDGFADIVGRRYGSAKLPFNRKKSWAGSISMFISGFLLSAMMMLYFSSLGYIDVIWEEALGKLALVALAATVVECVPVTEVVDDNISVPLATMLVAFLLFSSNRTIVN.

Residues 1-49 constitute a chloroplast transit peptide; the sequence is MAAAAAWTGAASPNSLLLSRSPPHAAALAPSPGSSMRRRLLLGVGTPAV. 6 consecutive transmembrane segments (helical) span residues 98 to 118, 122 to 144, 168 to 188, 227 to 247, 254 to 274, and 276 to 296; these read VVHVLSGVLFMSSWPLFSNST, YFAAVVPFLNSMRLLIYGLRLYT, YVLVLLFSVLVFWRESPIGIV, FISGFLLSAMMMLYFSSLGYI, ALGKLALVALAATVVECVPVT, and VVDDNISVPLATMLVAFLLFS.

Belongs to the polyprenol kinase family.

Its subcellular location is the plastid. The protein resides in the chloroplast membrane. It carries out the reaction phytol + CTP = phytyl phosphate + CDP + H(+). The protein operates within cofactor biosynthesis; tocopherol biosynthesis. Involved in the activation and reutilization of phytol from chlorophyll degradation in plant metabolism, including tocopherol biosynthesis. Catalyzes the conversion of phytol to phytol monophosphate (PMP). In Zea mays (Maize), this protein is Probable phytol kinase, chloroplastic.